The following is a 465-amino-acid chain: Glutamate--tRNA ligase (465 aa).

A 'HIGH' region motif is present at residues Pro5 to Gly15. Zn(2+) is bound by residues Cys96, Cys98, Cys118, and Asp120. A 'KMSKS' region motif is present at residues Lys228 to Arg232. Lys231 serves as a coordination point for ATP.

The protein belongs to the class-I aminoacyl-tRNA synthetase family. Glutamate--tRNA ligase type 1 subfamily. Monomer. Zn(2+) is required as a cofactor.

It is found in the cytoplasm. It catalyses the reaction tRNA(Glu) + L-glutamate + ATP = L-glutamyl-tRNA(Glu) + AMP + diphosphate. Its function is as follows. Catalyzes the attachment of glutamate to tRNA(Glu) in a two-step reaction: glutamate is first activated by ATP to form Glu-AMP and then transferred to the acceptor end of tRNA(Glu). This Salinispora tropica (strain ATCC BAA-916 / DSM 44818 / JCM 13857 / NBRC 105044 / CNB-440) protein is Glutamate--tRNA ligase.